Here is a 195-residue protein sequence, read N- to C-terminus: Der GTPase-activating protein YihI (195 aa).

The tract at residues 1–81 (MSRTKKTRRI…KAVVKEVKDP (81 aa)) is disordered. Basic and acidic residues-rich tracts occupy residues 9-23 (RITDIMPARKTDKPK), 38-49 (TRYELDAQAREE), and 66-81 (DPAEQKKAVVKEVKDP).

It belongs to the YihI family. As to quaternary structure, interacts with Der.

Functionally, a GTPase-activating protein (GAP) that modifies Der/EngA GTPase function. May play a role in ribosome biogenesis. The chain is Der GTPase-activating protein YihI from Mannheimia haemolytica (Pasteurella haemolytica).